The sequence spans 54 residues: Potassium channel toxin alpha-KTx 14.5 (54 aa).

A signal peptide spans M1–G23. Disulfide bonds link C30–C46, C36–C51, and C40–C53.

The protein belongs to the short scorpion toxin superfamily. Potassium channel inhibitor family. Alpha-KTx 14 subfamily. As to expression, expressed by the venom gland.

The protein resides in the secreted. In terms of biological role, inhibits potassium channels. May be active towards small conductance calcium-activated potassium channels (KCNN, SK), and less active towards voltage-gated potassium channels (Kv/KCN). This is Potassium channel toxin alpha-KTx 14.5 from Mesobuthus gibbosus (Mediterranean checkered scorpion).